Here is a 419-residue protein sequence, read N- to C-terminus: Histidine--tRNA ligase (419 aa).

The protein belongs to the class-II aminoacyl-tRNA synthetase family. In terms of assembly, homodimer.

It localises to the cytoplasm. It catalyses the reaction tRNA(His) + L-histidine + ATP = L-histidyl-tRNA(His) + AMP + diphosphate + H(+). The protein is Histidine--tRNA ligase of Syntrophotalea carbinolica (strain DSM 2380 / NBRC 103641 / GraBd1) (Pelobacter carbinolicus).